The sequence spans 243 residues: 3-deoxy-manno-octulosonate cytidylyltransferase (243 aa).

The protein belongs to the KdsB family.

The protein localises to the cytoplasm. It carries out the reaction 3-deoxy-alpha-D-manno-oct-2-ulosonate + CTP = CMP-3-deoxy-beta-D-manno-octulosonate + diphosphate. It participates in nucleotide-sugar biosynthesis; CMP-3-deoxy-D-manno-octulosonate biosynthesis; CMP-3-deoxy-D-manno-octulosonate from 3-deoxy-D-manno-octulosonate and CTP: step 1/1. Its pathway is bacterial outer membrane biogenesis; lipopolysaccharide biosynthesis. In terms of biological role, activates KDO (a required 8-carbon sugar) for incorporation into bacterial lipopolysaccharide in Gram-negative bacteria. The polypeptide is 3-deoxy-manno-octulosonate cytidylyltransferase (Helicobacter pylori (strain J99 / ATCC 700824) (Campylobacter pylori J99)).